A 341-amino-acid polypeptide reads, in one-letter code: Phosphoribosylformylglycinamidine cyclo-ligase (341 aa).

Belongs to the AIR synthase family.

It is found in the cytoplasm. It carries out the reaction 2-formamido-N(1)-(5-O-phospho-beta-D-ribosyl)acetamidine + ATP = 5-amino-1-(5-phospho-beta-D-ribosyl)imidazole + ADP + phosphate + H(+). It functions in the pathway purine metabolism; IMP biosynthesis via de novo pathway; 5-amino-1-(5-phospho-D-ribosyl)imidazole from N(2)-formyl-N(1)-(5-phospho-D-ribosyl)glycinamide: step 2/2. The sequence is that of Phosphoribosylformylglycinamidine cyclo-ligase from Finegoldia magna (strain ATCC 29328 / DSM 20472 / WAL 2508) (Peptostreptococcus magnus).